A 192-amino-acid chain; its full sequence is Cytidylate kinase (192 aa).

12–20 (GLAGSGTTT) contacts ATP.

It belongs to the cytidylate kinase family. Type 2 subfamily.

Its subcellular location is the cytoplasm. The catalysed reaction is CMP + ATP = CDP + ADP. It carries out the reaction dCMP + ATP = dCDP + ADP. The chain is Cytidylate kinase (cmk) from Pyrococcus horikoshii (strain ATCC 700860 / DSM 12428 / JCM 9974 / NBRC 100139 / OT-3).